The sequence spans 91 residues: UPF0213 protein NMC1807 (91 aa).

Residues 4–83 (SNWSVYLILC…AAQKRQLWEQ (80 aa)) form the GIY-YIG domain.

Belongs to the UPF0213 family.

This Neisseria meningitidis serogroup C / serotype 2a (strain ATCC 700532 / DSM 15464 / FAM18) protein is UPF0213 protein NMC1807.